Reading from the N-terminus, the 1705-residue chain is MIARILYFFLWSAAFLPELQCASQRTADALTTFPTSAFINGTDRKDSNQTSTSRIKRKTLSVDFAVPSLLRYYLALFIKRPLNGDCLSFNGCYTVRANLLMRCVPLQKTIAGLLDAKLAAMNVNRSSTGQLPYRQKRPVPKVLNLGLTSASRKSNQVVVEVGEEMVKTGCGGLHVYEDAPVVFLEMDLTRILEWWLGAEGGRLRVRLMPERKVQVPGKEDKYSAAIRASDARLFIQIASSERPSSTISRNPTVAPKYWNFSWIAEDELTFPEDPVSTSDCTSKAKSCDRRPDGYYPEFAWSLTSAEDSWAIDQTMVKTKASSQGWEEGRFLTVNSSALTGPWVLSPWFRAAHRPCGLDITVFLHPRQSGRYTVWLIERDKPPLALLTTEHPHVIGWAVVHLSLAARSKPFRISSSYSQPGEIETATYDPRYSTNCTTRSSQNVTLRGRYHCRGGREINVSQLCDFSIDCPQGDDEGEHCRQFLNGSYCSFGREDCGWQPVQGRGPQWRAHPSIPQSLRSSCPSPGALLAIDSQPKGQRGSAQVRSPLFFYPLRNAPCMVKFWVCGSSNGALSLWITENSTGPEGQRSLWNSTSEANMGKGWKLITLPLFGLVDLFYLQFSADISSSSGIAFAVDNFTLSMECFLETNGEFPPVAPISPTQALFTQSNENIKTTTTLYGGPGASTESVKWIFHTCGATGQDGPTPTQCSNSYRNTNVNVTVGTKGPFKGIQMWQVPETRKYRITAYGAAGGRSVLAVHKSHGVYMTGDFLLQKDELLYILVGQEGEDACPNMVPTMDRICREQQGPSINKTQLKGGGGGGGGGTYVFKVVNGVHIPLLIAAGGGGRGYSSQSETPEEVMDRDPSIPGRNGKSGTAGGGGGWNDSAPVPQGGRPLILGGQGGEPCQAMGWKTRGGFGGGGGACTAGGGGGGYRGGSAWHDNDPRKDGDDGTSYISPDGEMYLEPLKGMEGNGEVIINPVQNCSHCESGDCHETSEGMVCYCDEELTLAPDGVSCINSTELPLLPAQPSLSHLALGLSVGTSALIAALLLAVSGVMIMYRRKHTELQSIQLELQSPDCKLSKLRASTIMTDYNPNYCFGGKTASVNDLKEVPRRNISLTRGLGHGAFGEVYEGLAVGIPGEPSPMQVAVKTLPEVCSEQDELDFLMEALIISKFSHQNIVRCIGVSLQALPHFILLELMAGGDLKSFLRETRPRLEHPSSLTMVDLLNIARDIARGCQYLEENQFIHRDIAARNCLLTCKGPGRVAKIGDFGMARDIYRASYYRKGGRAMLPVKWMPPEAFMEGIFTSKTDTWSFGVLLWEIFSLGYMPYPSRSNQEVLEFVTNGGRMDPPKNCPGPVYRIMTQSWQHQPEDRPNFSTILERIDYCLQDPDVVNVPLPVEYGPIPEEEERVPMRPEDPSAPSLLVSPQGTEDVPSATHSAQSKKDGEAIHMANLSTDSKLPPVPPSQPHPHHHLQTPVVTAPVPASKPSSTTSNAQDGGHVNLGFMQAHSSEKESRNRKPTNLWNPTYGSWFLQQQQKRQQVQAQRQTSGPRIPGEGQEQVGRTVTVAEALGLQQQHKQQQYQQQLQRQQQQQQQQQQQQGLCRPLLPPPPPPAPTPLLLDSATLAPVPLYRLRRFPCGNIGYGYQEQGLPMEPMQGPQLPPPHPGQQRPISLTRASGPEDSRPLLVTMGTVQDSRLPKMEGHNATVL.

The N-terminal stretch at 1 to 21 (MIARILYFFLWSAAFLPELQC) is a signal peptide. At 22–1035 (ASQRTADALT…SLSHLALGLS (1014 aa)) the chain is on the extracellular side. 2 N-linked (GlcNAc...) asparagine glycosylation sites follow: asparagine 40 and asparagine 48. A heparin-binding region region spans residues 54 to 76 (RIKRKTLSVDFAVPSLLRYYLAL). N-linked (GlcNAc...) asparagine glycans are attached at residues asparagine 124, asparagine 259, asparagine 334, asparagine 434, asparagine 442, asparagine 458, asparagine 484, asparagine 578, asparagine 590, and asparagine 635. In terms of domain architecture, MAM spans 486–644 (SYCSFGREDC…NFTLSMECFL (159 aa)). A disulfide bridge links cysteine 694 with cysteine 707. N-linked (GlcNAc...) asparagine glycosylation is present at asparagine 717. Cysteine 788 and cysteine 799 are disulfide-bonded. N-linked (GlcNAc...) asparagine glycosylation is found at asparagine 808 and asparagine 881. Positions 842-892 (GGGRGYSSQSETPEEVMDRDPSIPGRNGKSGTAGGGGGWNDSAPVPQGGRP) are disordered. Cysteine 903 and cysteine 921 are disulfide-bonded. The N-linked (GlcNAc...) asparagine glycan is linked to asparagine 979. Intrachain disulfides connect cysteine 980–cysteine 988 and cysteine 983–cysteine 997. The tract at residues 980–1016 (CSHCESGDCHETSEGMVCYCDEELTLAPDGVSCINST) is EGF-like. An N-linked (GlcNAc...) asparagine glycan is attached at asparagine 1014. The chain crosses the membrane as a helical span at residues 1036 to 1056 (VGTSALIAALLLAVSGVMIMY). Topologically, residues 1057-1705 (RRKHTELQSI…KMEGHNATVL (649 aa)) are cytoplasmic. The Protein kinase domain occupies 1113-1389 (ISLTRGLGHG…IDYCLQDPDV (277 aa)). ATP contacts are provided by residues 1119-1127 (LGHGAFGEV) and lysine 1147. Residue aspartate 1246 is the Proton acceptor of the active site. Disordered stretches follow at residues 1395–1499 (PVEY…GHVN), 1505–1524 (AHSS…WNPT), 1532–1557 (QQQK…GQEQ), 1588–1613 (QQQQ…PAPT), and 1646–1681 (GLPM…DSRP). A compositionally biased stretch (polar residues) spans 1484-1493 (KPSSTTSNAQ). 2 stretches are compositionally biased toward low complexity: residues 1532–1544 (QQQK…AQRQ) and 1588–1602 (QQQQ…LCRP). Positions 1603-1613 (LLPPPPPPAPT) are enriched in pro residues.

This sequence belongs to the protein kinase superfamily. Tyr protein kinase family. Insulin receptor subfamily. In terms of assembly, homodimer; homodimerizes upon binding to alkal ligands (alkal1, alkal2a or alkal2b). In terms of tissue distribution, highly expressed in the developing central nervous system: highly expressed in brain, with much lower expression in heart, caudal fin and testis.

Its subcellular location is the cell membrane. The enzyme catalyses L-tyrosyl-[protein] + ATP = O-phospho-L-tyrosyl-[protein] + ADP + H(+). Its activity is regulated as follows. Inhibited by ALK inhibitor TAE684. Its function is as follows. Receptor tyrosine kinase required for neurogenesis in the developing central nervous system. Following activation by alkal ligands (alkal1, alkal2a or alkal2b) at the cell surface, transduces an extracellular signal into an intracellular response. Ligand-binding to the extracellular domain induces tyrosine kinase activation, resulting in the activation of the mitogen-activated protein kinase (MAPK) pathway. Phosphorylates almost exclusively at the first tyrosine of the Y-x-x-x-Y-Y motif. This chain is ALK tyrosine kinase receptor, found in Danio rerio (Zebrafish).